The following is a 99-amino-acid chain: Large ribosomal subunit protein uL23 (99 aa).

This sequence belongs to the universal ribosomal protein uL23 family. As to quaternary structure, part of the 50S ribosomal subunit. Contacts protein L29, and trigger factor when it is bound to the ribosome.

In terms of biological role, one of the early assembly proteins it binds 23S rRNA. One of the proteins that surrounds the polypeptide exit tunnel on the outside of the ribosome. Forms the main docking site for trigger factor binding to the ribosome. The sequence is that of Large ribosomal subunit protein uL23 from Hyphomonas neptunium (strain ATCC 15444).